A 315-amino-acid polypeptide reads, in one-letter code: MPALSCRFYQHKFPEVDDVVMVNVRSIAEMGAYVSLLEYNNIEGMILLSELSRRRIRSINKLIRIGRNECVVVIRVDKDKGYIDLSKRRVSPEEALKCEDKFTKSKTVYSILRHVAEVLEYTKDEQLESLYQRTAWVFDEKYKKPGYGAYDAFKHAVSDPDVLDGLDLNEDERRVLIDNINRRLTPQAVKIRADIEVACYGYEGIDAVKDALRAGLSCSTENMPIKINLIAPPRYVMTTTTLERTEGLSVLNQAMSVIKERIEEKRGVFNVQMEPKVVTDTDETELARQLERLEKENAEVDGDDDAEEMEAKTED.

Residues 17–88 (DDVVMVNVRS…DKGYIDLSKR (72 aa)) form the S1 motif domain. Residues Ser49 and Ser52 each carry the phosphoserine modification. The segment at 292–315 (RLEKENAEVDGDDDAEEMEAKTED) is disordered. Positions 299–308 (EVDGDDDAEE) are enriched in acidic residues.

This sequence belongs to the eIF-2-alpha family. Eukaryotic translation initiation factor 2 eIF2 is a heterotrimeric complex composed of an alpha, a beta and a gamma subunit. In terms of processing, phosphorylation at Ser-49 and Ser-52 stabilizes the eIF-2/GDP/eIF2B complex and prevents GDP/GTP exchange reaction, thus impairing the recycling of eIF-2 between successive rounds of initiation and leading to global inhibition of translation, while concomitantly initiating the preferential translation of integrated stress response (ISR)-specific mRNAs.

The protein resides in the cytoplasm. It is found in the stress granule. It localises to the cytosol. Activity is regulated by phosphorylation at Ser-49 and Ser-52, which stabilizes the eIF-2/GDP/eIF2B complex and prevents the eIF2B-mediated exchange of GDP for GTP, thereby preventing the formation of the 43S pre-initiation complex (PIC). This results in the global attenuation of 5' cap-dependent protein synthesis and concomitant translation of ISR-specific mRNAs that contain a short upstream open reading frame (uORF) in their 5' UTR. Functionally, functions in the early steps of protein synthesis by forming a ternary complex with GTP and initiator tRNA. This complex binds to a 40S ribosomal subunit, followed by mRNA binding to form a 43S pre-initiation complex. Junction of the 60S ribosomal subunit to form the 80S initiation complex is preceded by hydrolysis of the GTP bound to eIF-2 and release of an eIF-2-GDP binary complex. In order for eIF-2 to recycle and catalyze another round of initiation, the GDP bound to eIF-2 must exchange with GTP by way of a reaction catalyzed by eIF2B. EIF2S1/eIF2-alpha is a key component of the integrated stress response (ISR), required for adaptation to various stress: phosphorylation by metabolic-stress sensing protein kinases in response to stress converts EIF2S1/eIF-2-alpha in a global protein synthesis inhibitor, leading to a attenuation of cap-dependent translation, while concomitantly initiating the preferential translation of ISR-specific mRNAs, such as the transcriptional activators ATF4 and QRICH1. This Xenopus tropicalis (Western clawed frog) protein is Eukaryotic translation initiation factor 2 subunit 1 (eif2s1).